The chain runs to 60 residues: Large ribosomal subunit protein uL30 (60 aa).

This sequence belongs to the universal ribosomal protein uL30 family. In terms of assembly, part of the 50S ribosomal subunit.

In Streptococcus gordonii (strain Challis / ATCC 35105 / BCRC 15272 / CH1 / DL1 / V288), this protein is Large ribosomal subunit protein uL30.